A 548-amino-acid polypeptide reads, in one-letter code: CTP synthase (548 aa).

The tract at residues 1 to 270 is amidoligase domain; sequence MTKYVFVTGG…DNIVCEALGL (270 aa). Ser13 is a binding site for CTP. Ser13 serves as a coordination point for UTP. ATP-binding positions include 14 to 19 and Asp71; that span reads SLGKGI. 2 residues coordinate Mg(2+): Asp71 and Glu144. Residues 151–153, 191–196, and Lys227 each bind CTP; these read DIE and KTKPTQ. Residues 191-196 and Lys227 each bind UTP; that span reads KTKPTQ. The Glutamine amidotransferase type-1 domain maps to 295–545; that stretch reads TIGMVGKYVD…IEAAIANHAR (251 aa). Gly356 lines the L-glutamine pocket. Cys383 (nucleophile; for glutamine hydrolysis) is an active-site residue. Residues 384-387, Glu407, and Arg473 each bind L-glutamine; that span reads LGMQ. Catalysis depends on residues His518 and Glu520.

Belongs to the CTP synthase family. Homotetramer.

The enzyme catalyses UTP + L-glutamine + ATP + H2O = CTP + L-glutamate + ADP + phosphate + 2 H(+). The catalysed reaction is L-glutamine + H2O = L-glutamate + NH4(+). It catalyses the reaction UTP + NH4(+) + ATP = CTP + ADP + phosphate + 2 H(+). The protein operates within pyrimidine metabolism; CTP biosynthesis via de novo pathway; CTP from UDP: step 2/2. Allosterically activated by GTP, when glutamine is the substrate; GTP has no effect on the reaction when ammonia is the substrate. The allosteric effector GTP functions by stabilizing the protein conformation that binds the tetrahedral intermediate(s) formed during glutamine hydrolysis. Inhibited by the product CTP, via allosteric rather than competitive inhibition. Its function is as follows. Catalyzes the ATP-dependent amination of UTP to CTP with either L-glutamine or ammonia as the source of nitrogen. Regulates intracellular CTP levels through interactions with the four ribonucleotide triphosphates. The sequence is that of CTP synthase from Bordetella petrii (strain ATCC BAA-461 / DSM 12804 / CCUG 43448).